Here is a 415-residue protein sequence, read N- to C-terminus: Plasminogen activator inhibitor 2, macrophage (415 aa).

N-linked (GlcNAc...) asparagine glycans are attached at residues Asn23, Asn75, Asn261, and Asn339.

Belongs to the serpin family. Ov-serpin subfamily. In terms of assembly, interacts with PSMB1. In terms of processing, the signal sequence is not cleaved.

The protein localises to the cytoplasm. It is found in the secreted. Its subcellular location is the extracellular space. Inhibits urokinase-type plasminogen activator. The monocyte derived PAI-2 is distinct from the endothelial cell-derived PAI-1. Not required for normal murine development or survival. This is Plasminogen activator inhibitor 2, macrophage (Serpinb2) from Mus musculus (Mouse).